We begin with the raw amino-acid sequence, 226 residues long: uncharacterized protein (226 aa).

In terms of domain architecture, N-acetyltransferase spans 18–219 (LTIRNYTETD…YGVLMEWKNV (202 aa)).

The protein belongs to the acetyltransferase family.

This is an uncharacterized protein from Bacillus subtilis (strain 168).